We begin with the raw amino-acid sequence, 93 residues long: CRISPR-associated endoribonuclease Cas2 (93 aa).

Asp8 is a binding site for Mg(2+).

The protein belongs to the CRISPR-associated endoribonuclease Cas2 protein family. In terms of assembly, homodimer, forms a heterotetramer with a Cas1 homodimer. Requires Mg(2+) as cofactor.

In terms of biological role, CRISPR (clustered regularly interspaced short palindromic repeat), is an adaptive immune system that provides protection against mobile genetic elements (viruses, transposable elements and conjugative plasmids). CRISPR clusters contain sequences complementary to antecedent mobile elements and target invading nucleic acids. CRISPR clusters are transcribed and processed into CRISPR RNA (crRNA). Functions as a ssRNA-specific endoribonuclease. Involved in the integration of spacer DNA into the CRISPR cassette. The sequence is that of CRISPR-associated endoribonuclease Cas2 from Thermofilum pendens (strain DSM 2475 / Hrk 5).